The sequence spans 531 residues: T-complex protein 1 subunit zeta-2 (531 aa).

Belongs to the TCP-1 chaperonin family. Component of the chaperonin-containing T-complex (TRiC), a heterooligomeric complex of about 850 to 900 kDa that forms two stacked rings, 12 to 16 nm in diameter.

It localises to the cytoplasm. Functionally, component of the chaperonin-containing T-complex (TRiC), a molecular chaperone complex that assists the folding of proteins upon ATP hydrolysis. The chain is T-complex protein 1 subunit zeta-2 (CCT6B) from Bos taurus (Bovine).